Here is a 452-residue protein sequence, read N- to C-terminus: Scaffold protein ILK (452 aa).

ANK repeat units follow at residues D2–G30, D31–M63, N64–V96, N97–A129, and N130–R174. Positions L193 to L446 constitute a Protein kinase domain. Residues N200, N202, S204, H270, M272, and N279 each coordinate ATP. D339 contacts Mg(2+). An ATP-binding site is contributed by K341. The Nuclear localization signal signature appears at K363–R371.

It belongs to the protein kinase superfamily. TKL Ser/Thr protein kinase family. As to quaternary structure, interacts with PXN/PAXILLIN (via LD motif 4).

The protein localises to the cell junction. It is found in the focal adhesion. The protein resides in the cell membrane. It localises to the cell projection. Its subcellular location is the lamellipodium. The protein localises to the cytoplasm. It is found in the myofibril. The protein resides in the sarcomere. It localises to the nucleus. Its subcellular location is the cytoskeleton. The protein localises to the microtubule organizing center. It is found in the centrosome. The protein resides in the cell cortex. Functionally, scaffold protein which mediates protein-protein interactions during a range of cellular events including focal adhesion assembly, cell adhesion and cell migration. This chain is Scaffold protein ILK, found in Gallus gallus (Chicken).